A 391-amino-acid polypeptide reads, in one-letter code: Phosphoglycerate kinase (391 aa).

Residues 21–23, arginine 36, 59–62, arginine 113, and arginine 146 contribute to the substrate site; these read DLN and HLGR. ATP is bound by residues lysine 197, glutamate 319, and 345–348; that span reads GGDT.

Belongs to the phosphoglycerate kinase family. As to quaternary structure, monomer.

The protein localises to the cytoplasm. It carries out the reaction (2R)-3-phosphoglycerate + ATP = (2R)-3-phospho-glyceroyl phosphate + ADP. It functions in the pathway carbohydrate degradation; glycolysis; pyruvate from D-glyceraldehyde 3-phosphate: step 2/5. The chain is Phosphoglycerate kinase from Shewanella baltica (strain OS195).